The primary structure comprises 406 residues: MQVYLVGGAVRDQLLGIDSYDNDWVVVGATPEMMLAQGYTAVGKDFPVFLHPKNKEEHALARTERKSGSGYTGFDCFFDPSVTLEEDLIRRDLTINAMAMDDSGQLYDPYGGQADLNNRILRHVSDAFVEDPLRVLRVARFSAKLASLGFTVAKETMQLMRDIADSGELNTLTPERVWQEWHKSLSTPRPDVFLSVLRDCGALAVVLPEIEALFGVPQPEKWHPEIDTGIHTLMVAEQAAKLSTSLPVRFAAQVHDLGKGVTPESEWPSHKMHCHTGLKLIKKLCERVRVPNEFKELALMVCEQHSNIHRAAELKPQTIIKILNKFDVWRKSERLKDILICCQADHAGRKGLEDLPYPQAGIFMLAYQAAASVDVQAIIQDGFKGPAIRDEQEKRRIEAVKVALNK.

Residues glycine 8 and arginine 11 each coordinate ATP. CTP is bound by residues glycine 8 and arginine 11. Positions 21 and 23 each coordinate Mg(2+). Positions 91, 137, and 140 each coordinate ATP. CTP contacts are provided by arginine 91, arginine 137, and arginine 140. The HD domain maps to 228 to 329 (TGIHTLMVAE…IKILNKFDVW (102 aa)).

This sequence belongs to the tRNA nucleotidyltransferase/poly(A) polymerase family. Bacterial CCA-adding enzyme type 1 subfamily. Monomer. Can also form homodimers and oligomers. Requires Mg(2+) as cofactor. Ni(2+) is required as a cofactor.

It carries out the reaction a tRNA precursor + 2 CTP + ATP = a tRNA with a 3' CCA end + 3 diphosphate. It catalyses the reaction a tRNA with a 3' CCA end + 2 CTP + ATP = a tRNA with a 3' CCACCA end + 3 diphosphate. Its function is as follows. Catalyzes the addition and repair of the essential 3'-terminal CCA sequence in tRNAs without using a nucleic acid template. Adds these three nucleotides in the order of C, C, and A to the tRNA nucleotide-73, using CTP and ATP as substrates and producing inorganic pyrophosphate. tRNA 3'-terminal CCA addition is required both for tRNA processing and repair. Also involved in tRNA surveillance by mediating tandem CCA addition to generate a CCACCA at the 3' terminus of unstable tRNAs. While stable tRNAs receive only 3'-terminal CCA, unstable tRNAs are marked with CCACCA and rapidly degraded. The protein is Multifunctional CCA protein of Vibrio parahaemolyticus serotype O3:K6 (strain RIMD 2210633).